The sequence spans 229 residues: 2-C-methyl-D-erythritol 4-phosphate cytidylyltransferase (229 aa).

The protein belongs to the IspD/TarI cytidylyltransferase family. IspD subfamily.

The enzyme catalyses 2-C-methyl-D-erythritol 4-phosphate + CTP + H(+) = 4-CDP-2-C-methyl-D-erythritol + diphosphate. The protein operates within isoprenoid biosynthesis; isopentenyl diphosphate biosynthesis via DXP pathway; isopentenyl diphosphate from 1-deoxy-D-xylulose 5-phosphate: step 2/6. Functionally, catalyzes the formation of 4-diphosphocytidyl-2-C-methyl-D-erythritol from CTP and 2-C-methyl-D-erythritol 4-phosphate (MEP). In Bacillus pumilus (strain SAFR-032), this protein is 2-C-methyl-D-erythritol 4-phosphate cytidylyltransferase.